Reading from the N-terminus, the 150-residue chain is Mating pheromone 1 (150 aa).

An N-terminal signal peptide occupies residues 1-16 (MKAIFIILAILMVTQA). A propeptide spanning residues 17–52 (FKMTSKVNTKLQSQIQSKFQSKNKLASTFQTSSKLK) is cleaved from the precursor.

The protein localises to the secreted. Its function is as follows. Mating ciliate pheromones (or gamones) are diffusible extracellular communication signals that distinguish different intraspecific classes of cells commonly referred to as 'mating types'. They prepare the latter for conjugation by changing their cell surface properties. The sequence is that of Mating pheromone 1 from Euplotoides octocarinatus (Freshwater ciliate).